We begin with the raw amino-acid sequence, 374 residues long: Putative glutamate--cysteine ligase 2-1 (374 aa).

It belongs to the glutamate--cysteine ligase type 2 family. YbdK subfamily.

It catalyses the reaction L-cysteine + L-glutamate + ATP = gamma-L-glutamyl-L-cysteine + ADP + phosphate + H(+). ATP-dependent carboxylate-amine ligase which exhibits weak glutamate--cysteine ligase activity. The protein is Putative glutamate--cysteine ligase 2-1 of Saccharopolyspora erythraea (strain ATCC 11635 / DSM 40517 / JCM 4748 / NBRC 13426 / NCIMB 8594 / NRRL 2338).